Consider the following 317-residue polypeptide: CXXC-type zinc finger protein 5 (317 aa).

A compositionally biased stretch (gly residues) spans 1–10; sequence MSSLGGGSQD. A disordered region spans residues 1 to 92; the sequence is MSSLGGGSQD…SFGSSGGGGS (92 aa). Composition is skewed to low complexity over residues 11-27 and 36-51; these read AGGS…SGSG and STAV…VADD. A CXXC-type zinc finger spans residues 251-292; it reads GKKKRKRCGMCAPCRRRINCEQCSSCRNRKTGHQICKFRKCE. A Nuclear localization signal motif is present at residues 252 to 257; the sequence is KKKRKR. Cys-258, Cys-261, Cys-264, Cys-270, Cys-273, Cys-276, Cys-286, and Cys-291 together coordinate Zn(2+).

Interacts with DVL1. Interacts with RBPJ.

It is found in the nucleus. Its subcellular location is the cytoplasm. Functionally, may indirectly participate in activation of the NF-kappa-B and MAPK pathways. Acts as a mediator of BMP4-mediated modulation of canonical Wnt signaling activity in neural stem cells. Required for DNA damage-induced ATM phosphorylation, p53 activation and cell cycle arrest. Involved in myelopoiesis. Binds to the oxygen responsive element of COX4I2 and represses its transcription under hypoxia conditions (4% oxygen), as well as normoxia conditions (20% oxygen). May repress COX4I2 transactivation induced by CHCHD2 and RBPJ. Binds preferentially to DNA containing cytidine-phosphate-guanosine (CpG) dinucleotides over CpH (H=A, T, and C), hemimethylated-CpG and hemimethylated-hydroxymethyl-CpG. The protein is CXXC-type zinc finger protein 5 (Cxxc5) of Mus musculus (Mouse).